The following is a 424-amino-acid chain: Tyrosine--tRNA ligase (424 aa).

Tyrosine 36 lines the L-tyrosine pocket. Positions 41–50 (PTAPSLHAGH) match the 'HIGH' region motif. L-tyrosine-binding residues include tyrosine 171 and glutamine 175. The short motif at 231-235 (KFGKS) is the 'KMSKS' region element. Lysine 234 is an ATP binding site. The S4 RNA-binding domain occupies 356-413 (DGIVDLLVASGLSASKGAARRTIHEGGVSVNNIRVDNEEWVPQSSDFLHGRWLVLRRG).

It belongs to the class-I aminoacyl-tRNA synthetase family. TyrS type 1 subfamily. In terms of assembly, homodimer.

The protein resides in the cytoplasm. It catalyses the reaction tRNA(Tyr) + L-tyrosine + ATP = L-tyrosyl-tRNA(Tyr) + AMP + diphosphate + H(+). Functionally, catalyzes the attachment of tyrosine to tRNA(Tyr) in a two-step reaction: tyrosine is first activated by ATP to form Tyr-AMP and then transferred to the acceptor end of tRNA(Tyr). The sequence is that of Tyrosine--tRNA ligase from Mycobacterium bovis (strain ATCC BAA-935 / AF2122/97).